The primary structure comprises 130 residues: MIGNWNYGTGRRKTSVARVFIKKGTGKIVVNGKPVDEFFARETGRMVVRQPLALTGHLESFDIKVNVIGGGETGQAGAVRHGITRALIDYDATLKPALSQAGFVTRDAREVERKKVGLRKARRRKQFSKR.

Belongs to the universal ribosomal protein uS9 family.

The polypeptide is Small ribosomal subunit protein uS9 (Bordetella avium (strain 197N)).